The following is a 90-amino-acid chain: UPF0298 protein RBAM_014860 (90 aa).

The protein belongs to the UPF0298 family.

Its subcellular location is the cytoplasm. The chain is UPF0298 protein RBAM_014860 from Bacillus velezensis (strain DSM 23117 / BGSC 10A6 / LMG 26770 / FZB42) (Bacillus amyloliquefaciens subsp. plantarum).